A 214-amino-acid polypeptide reads, in one-letter code: MKTVLITGFEPFGGEQINPSWEVVSQLDNAILGGCRVVARQLPCVFGESLAVLNSAIDALSPSVVLAVGQAGGRTDITVERVAINVDDARIPDNRGNQPVDVPVIPNGPAAWFSTLPIKAMVSAIREAGIPASVSQTAGTFVCNHVMYGLLHKLSSMADVKGGFIHIPYLPQQAAAHPGAPSMAADTVRRALETAIITALYVDADIIVAGGATH.

Residues Glu80, Cys143, and His166 contribute to the active site.

Belongs to the peptidase C15 family. In terms of assembly, homotetramer.

The protein resides in the cytoplasm. The enzyme catalyses Release of an N-terminal pyroglutamyl group from a polypeptide, the second amino acid generally not being Pro.. In terms of biological role, removes 5-oxoproline from various penultimate amino acid residues except L-proline. This Escherichia fergusonii (strain ATCC 35469 / DSM 13698 / CCUG 18766 / IAM 14443 / JCM 21226 / LMG 7866 / NBRC 102419 / NCTC 12128 / CDC 0568-73) protein is Pyrrolidone-carboxylate peptidase.